A 406-amino-acid chain; its full sequence is Probable delta-aminolevulinic acid dehydratase 2, chloroplastic (406 aa).

Residues Met1–Arg34 constitute a chloroplast transit peptide. Residue Lys275 is the Schiff-base intermediate with substrate of the active site. 5-aminolevulinate contacts are provided by Arg285 and Lys291. Residue Glu307 participates in Mg(2+) binding. The active-site Schiff-base intermediate with substrate is the Lys322. Residues Ser348 and Tyr387 each coordinate 5-aminolevulinate.

It belongs to the ALAD family. In terms of assembly, homooctamer. Mg(2+) is required as a cofactor.

The protein localises to the plastid. The protein resides in the chloroplast. The enzyme catalyses 2 5-aminolevulinate = porphobilinogen + 2 H2O + H(+). It participates in porphyrin-containing compound metabolism; protoporphyrin-IX biosynthesis; coproporphyrinogen-III from 5-aminolevulinate: step 1/4. Its pathway is porphyrin-containing compound metabolism; chlorophyll biosynthesis. Catalyzes an early step in the biosynthesis of tetrapyrroles. Binds two molecules of 5-aminolevulinate per subunit, each at a distinct site, and catalyzes their condensation to form porphobilinogen. The protein is Probable delta-aminolevulinic acid dehydratase 2, chloroplastic (HEMB2) of Arabidopsis thaliana (Mouse-ear cress).